The primary structure comprises 202 residues: Protein EMBRYO DEFECTIVE 514 (202 aa).

Disordered regions lie at residues 1–69 (MAEE…PVKL) and 168–202 (MKTP…RFRR). The residue at position 2 (A2) is an N-acetylalanine. 2 stretches are compositionally biased toward basic and acidic residues: residues 33–42 (ETGDEKRERE) and 51–65 (GESK…EKSG). The segment covering 174 to 202 (NGNGHGGGRGGGGGRRGGRGGGRGGRFRR) has biased composition (gly residues).

Expressed in leaves, flowers and embryos at globular stage.

It localises to the nucleus. May play a role in ribosome biogenesis and in determining the rate of cell division. Involved in a process essential for nuclear and nucleolar functions. This Arabidopsis thaliana (Mouse-ear cress) protein is Protein EMBRYO DEFECTIVE 514.